The chain runs to 432 residues: D-amino acid dehydrogenase 1 (432 aa).

Valine 3–tyrosine 17 contributes to the FAD binding site. A disordered region spans residues glycine 410 to histidine 432.

This sequence belongs to the DadA oxidoreductase family. FAD serves as cofactor.

The catalysed reaction is a D-alpha-amino acid + A + H2O = a 2-oxocarboxylate + AH2 + NH4(+). It functions in the pathway amino-acid degradation; D-alanine degradation; NH(3) and pyruvate from D-alanine: step 1/1. Functionally, catalyzes the oxidative deamination of D-amino acids. Has very broad substrate specificity; all the D-amino acids tested can be used as the substrate except D-Glu and D-Gln. Participates in the utilization of several D-amino acids as the sole source of nitrogen, i.e. D-alanine, D-histidine, D-phenylalanine, D-serine, D-threonine, and D-valine. The sequence is that of D-amino acid dehydrogenase 1 (dadA1) from Pseudomonas aeruginosa (strain ATCC 15692 / DSM 22644 / CIP 104116 / JCM 14847 / LMG 12228 / 1C / PRS 101 / PAO1).